We begin with the raw amino-acid sequence, 143 residues long: Small ribosomal subunit protein uS9 (143 aa).

The segment at 123–143 (RPEPKKFGGRGARARFQKSYR) is disordered. Residues 134-143 (ARARFQKSYR) are compositionally biased toward basic residues.

This sequence belongs to the universal ribosomal protein uS9 family.

The sequence is that of Small ribosomal subunit protein uS9 (RPS16) from Eremothecium gossypii (strain ATCC 10895 / CBS 109.51 / FGSC 9923 / NRRL Y-1056) (Yeast).